The following is a 333-amino-acid chain: Cytochrome f (333 aa).

An N-terminal signal peptide occupies residues 1–44; the sequence is MRNACTRARLTRTARAMVKTLFIAIASVTFFFTSDLALPQSAAA. Residues tyrosine 45, cysteine 66, cysteine 69, and histidine 70 each coordinate heme. Residues 299-318 form a helical membrane-spanning segment; that stretch reads VGWLIAFVALVMLAQVMLVL.

This sequence belongs to the cytochrome f family. As to quaternary structure, the 4 large subunits of the cytochrome b6-f complex are cytochrome b6, subunit IV (17 kDa polypeptide, PetD), cytochrome f and the Rieske protein, while the 4 small subunits are PetG, PetL, PetM and PetN. The complex functions as a dimer. Heme serves as cofactor.

The protein localises to the cellular thylakoid membrane. Component of the cytochrome b6-f complex, which mediates electron transfer between photosystem II (PSII) and photosystem I (PSI), cyclic electron flow around PSI, and state transitions. The protein is Cytochrome f of Trichormus variabilis (strain ATCC 29413 / PCC 7937) (Anabaena variabilis).